The primary structure comprises 261 residues: Expansin-B2 (261 aa).

The N-terminal stretch at 1-24 is a signal peptide; the sequence is MAGASAKVVAMLLSVLATYGFAAG. The 107-residue stretch at 51-157 folds into the Expansin-like EG45 domain; that stretch reads GGACGFKNTN…RRVPCYHRGL (107 aa). Disulfide bonds link Cys-54–Cys-82, Cys-85–Cys-152, and Cys-90–Cys-96. In terms of domain architecture, Expansin-like CBD spans 170–256; that stretch reads VYLAVLVEFA…NWRANTNYGS (87 aa).

It belongs to the expansin family. Expansin B subfamily. Expressed in roots.

The protein localises to the secreted. The protein resides in the cell wall. It localises to the membrane. In terms of biological role, may cause loosening and extension of plant cell walls by disrupting non-covalent bonding between cellulose microfibrils and matrix glucans. No enzymatic activity has been found. May be required for rapid internodal elongation in deepwater rice during submergence. The protein is Expansin-B2 (EXPB2) of Oryza sativa subsp. japonica (Rice).